The following is a 202-amino-acid chain: Na(+)-translocating NADH-quinone reductase subunit E (202 aa).

Transmembrane regions (helical) follow at residues 11–31 (AVFVENMALAFFLGMCTFIAI), 35–55 (VETAIGLGVAVIVVLGITMPV), 79–99 (LSFLGLLTFIGVIAALVQILE), 114–134 (GVFLPLITVNCAIMGGSLFMV), 144–164 (TVYGIGAGVSWALAIAALAGI), and 180–200 (LGITFITIGLMSLGFMSFSGV).

Belongs to the NqrDE/RnfAE family. As to quaternary structure, composed of six subunits; NqrA, NqrB, NqrC, NqrD, NqrE and NqrF.

Its subcellular location is the cell inner membrane. It catalyses the reaction a ubiquinone + n Na(+)(in) + NADH + H(+) = a ubiquinol + n Na(+)(out) + NAD(+). NQR complex catalyzes the reduction of ubiquinone-1 to ubiquinol by two successive reactions, coupled with the transport of Na(+) ions from the cytoplasm to the periplasm. NqrA to NqrE are probably involved in the second step, the conversion of ubisemiquinone to ubiquinol. The sequence is that of Na(+)-translocating NADH-quinone reductase subunit E from Ectopseudomonas mendocina (strain ymp) (Pseudomonas mendocina).